A 400-amino-acid polypeptide reads, in one-letter code: MKIVLAYSGGLDTSIILKWLKETYRAEVIAFTADIGQGEEVEEAREKALRTGASKAIALDLKEEFVRDFVFPMMRAGAVYEGYYLLGTSIARPLIAKHLVRIAEEEGAEAIAHGATGKGNDQVRFELTAYALKPDIKVIAPWREWSFQGRKEMIAYAEAHGIPVPVTQEKPYSMDANLLHISYEGGVLEDPWAEPPKGMFRMTQDPEEAPDAPEYVEVEFFEGDPVAVNGERLSPAALLQRLNEIGGRHGVGRVDIVENRFVGMKSRGVYETPGGTILYHARRAVESLTLDREVLHQRDMLSPKYAELVYYGFWYAPEREALQAYFDHVARSVTGVARLKLYKGNVYVVGRKAPKSLYRQDLVSFDEAGGYDQKDAEGFIKIQALRLRVRALVEREGHGA.

ATP is bound by residues 6-14 and Ala-33; that span reads AYSGGLDTS. 2 residues coordinate L-citrulline: Tyr-84 and Ser-89. Gly-114 contributes to the ATP binding site. Residues Thr-116, Asn-120, and Asp-121 each coordinate L-aspartate. Residue Asn-120 coordinates L-citrulline. Residues Arg-124, Ser-173, Ser-182, Glu-258, and Tyr-270 each contribute to the L-citrulline site.

The protein belongs to the argininosuccinate synthase family. Type 1 subfamily. As to quaternary structure, homotetramer.

The protein localises to the cytoplasm. It catalyses the reaction L-citrulline + L-aspartate + ATP = 2-(N(omega)-L-arginino)succinate + AMP + diphosphate + H(+). It participates in amino-acid biosynthesis; L-arginine biosynthesis; L-arginine from L-ornithine and carbamoyl phosphate: step 2/3. In Thermus thermophilus (strain ATCC 27634 / DSM 579 / HB8), this protein is Argininosuccinate synthase.